The sequence spans 402 residues: Envelope glycoprotein D (402 aa).

Residues 1–17 (MLLAALLAALVARTTLG) form the signal peptide. Intrachain disulfides connect C66/C189, C105/C205, and C117/C126. Residues 238-316 (YRKNGRTLPR…RPTPRPPRPE (79 aa)) are profusion. Positions 252–350 (ATPYAIDPAR…PRTPAAPGVS (99 aa)) are disordered. Residues 269–278 (PRPRPRPRPR) are compositionally biased toward basic residues. Residues 282–292 (EPAPATPAPPD) show a composition bias toward pro residues. A compositionally biased stretch (basic and acidic residues) spans 293–304 (RLPEPATRDHAA). The chain crosses the membrane as a helical span at residues 356 to 376 (IVGTGTAMGALLVGVCVYIFF).

The protein belongs to the herpesviridae glycoprotein D family. Post-translationally, not N-glycosylated.

The protein resides in the virion membrane. Functionally, envelope glycoprotein that binds to the host cell entry receptor NECTIN1, promoting the virus entry into host cells. In contrast, does not use host TNFRSF14 as receptor. May trigger fusion with host membrane, by recruiting the fusion machinery composed of gB and gH/gL. The protein is Envelope glycoprotein D of Suid herpesvirus 1 (strain Rice) (SuHV-1).